Consider the following 493-residue polypeptide: Alpha-amylase-related protein (493 aa).

Positions 1–19 are cleaved as a signal peptide; the sequence is MFKFALTLTLCLAGSLSLA. Glutamine 20 carries the post-translational modification Pyrrolidone carboxylic acid. Residues cysteine 47 and cysteine 103 are joined by a disulfide bond. Asparagine 117, glutamine 168, and aspartate 177 together coordinate Ca(2+). The cysteines at positions 156 and 170 are disulfide-linked. Residue arginine 205 coordinates chloride. The active-site Nucleophile is the aspartate 207. A Ca(2+)-binding site is contributed by histidine 211. The Proton donor role is filled by glutamate 244. Chloride is bound by residues asparagine 307 and arginine 342. Intrachain disulfides connect cysteine 375-cysteine 381, cysteine 417-cysteine 440, and cysteine 447-cysteine 459.

This sequence belongs to the glycosyl hydrolase 13 family. In terms of assembly, monomer. The cofactor is Ca(2+). Chloride is required as a cofactor.

Its subcellular location is the secreted. The enzyme catalyses Endohydrolysis of (1-&gt;4)-alpha-D-glucosidic linkages in polysaccharides containing three or more (1-&gt;4)-alpha-linked D-glucose units.. The polypeptide is Alpha-amylase-related protein (Amyrel) (Drosophila simulans (Fruit fly)).